Reading from the N-terminus, the 268-residue chain is Tryptophan synthase alpha chain (268 aa).

Catalysis depends on proton acceptor residues Glu-49 and Asp-60.

Belongs to the TrpA family. Tetramer of two alpha and two beta chains.

The enzyme catalyses (1S,2R)-1-C-(indol-3-yl)glycerol 3-phosphate + L-serine = D-glyceraldehyde 3-phosphate + L-tryptophan + H2O. It functions in the pathway amino-acid biosynthesis; L-tryptophan biosynthesis; L-tryptophan from chorismate: step 5/5. The alpha subunit is responsible for the aldol cleavage of indoleglycerol phosphate to indole and glyceraldehyde 3-phosphate. This Aeromonas hydrophila subsp. hydrophila (strain ATCC 7966 / DSM 30187 / BCRC 13018 / CCUG 14551 / JCM 1027 / KCTC 2358 / NCIMB 9240 / NCTC 8049) protein is Tryptophan synthase alpha chain.